The chain runs to 163 residues: Small ribosomal subunit protein bS6 (163 aa).

A disordered region spans residues 97–163; it reads EEGQTAMLTN…GRNEGEGDRA (67 aa). Residues 122–163 are compositionally biased toward basic and acidic residues; the sequence is RGPRRDFGDRGPRRDFGDRGPRRDGDGPRAEGGRNEGEGDRA.

Belongs to the bacterial ribosomal protein bS6 family.

In terms of biological role, binds together with bS18 to 16S ribosomal RNA. The polypeptide is Small ribosomal subunit protein bS6 (Rhodospirillum centenum (strain ATCC 51521 / SW)).